Here is a 629-residue protein sequence, read N- to C-terminus: tRNA uridine 5-carboxymethylaminomethyl modification enzyme MnmG (629 aa).

Position 14 to 19 (14 to 19 (GAGHAG)) interacts with FAD. 274–288 (GPRYCPSIEDKVVRF) serves as a coordination point for NAD(+).

Belongs to the MnmG family. Homodimer. Heterotetramer of two MnmE and two MnmG subunits. The cofactor is FAD.

Its subcellular location is the cytoplasm. NAD-binding protein involved in the addition of a carboxymethylaminomethyl (cmnm) group at the wobble position (U34) of certain tRNAs, forming tRNA-cmnm(5)s(2)U34. The polypeptide is tRNA uridine 5-carboxymethylaminomethyl modification enzyme MnmG (Xylella fastidiosa (strain Temecula1 / ATCC 700964)).